The sequence spans 275 residues: Exosome complex component RRP40 (275 aa).

Residue Ala-2 is modified to N-acetylalanine. Residue Lys-151 forms a Glycyl lysine isopeptide (Lys-Gly) (interchain with G-Cter in SUMO2) linkage.

This sequence belongs to the RRP40 family. In terms of assembly, component of the RNA exosome core complex (Exo-9), composed of EXOSC1, EXOSC2, EXOSC3, EXOSC4, EXOSC5, EXOSC6, EXOSC7, EXOSC8 and EXOSC9; within the complex interacts with EXOSC5 and EXOSC9. The catalytically inactive RNA exosome core complex (Exo-9) associates with the catalytic subunit EXOSC10/RRP6. Exo-9 may associate with DIS3 to form the nucleolar exosome complex, or DIS3L to form the cytoplasmic exosome complex. Exo-9 is formed by a hexameric base ring consisting of the heterodimers EXOSC4-EXOSC9, EXOSC5-EXOSC8 and EXOSC6-EXOSC7, and a cap ring consisting of EXOSC1, EXOSC2 and EXOSC3. The RNA exosome complex associates with cofactors C1D/RRP47, MPHOSPH6/MPP6 and MTREX/MTR4. Interacts with MPHOSPH6/MPP6; the interaction is direct. Interacts with GTPBP1. Interacts with ZC3HAV1. Interacts with DDX17 only in the presence of ZC3HAV1 in an RNA-independent manner. Interacts with DHX36; this interaction occurs in a RNase-insensitive manner. Interacts with HBS1L isoform 2.

It is found in the cytoplasm. Its subcellular location is the nucleus. It localises to the nucleolus. In terms of biological role, non-catalytic component of the RNA exosome complex which has 3'-&gt;5' exoribonuclease activity and participates in a multitude of cellular RNA processing and degradation events. In the nucleus, the RNA exosome complex is involved in proper maturation of stable RNA species such as rRNA, snRNA and snoRNA, in the elimination of RNA processing by-products and non-coding 'pervasive' transcripts, such as antisense RNA species and promoter-upstream transcripts (PROMPTs), and of mRNAs with processing defects, thereby limiting or excluding their export to the cytoplasm. The RNA exosome may be involved in Ig class switch recombination (CSR) and/or Ig variable region somatic hypermutation (SHM) by targeting AICDA deamination activity to transcribed dsDNA substrates. In the cytoplasm, the RNA exosome complex is involved in general mRNA turnover and specifically degrades inherently unstable mRNAs containing AU-rich elements (AREs) within their 3' untranslated regions, and in RNA surveillance pathways, preventing translation of aberrant mRNAs. It seems to be involved in degradation of histone mRNA. The catalytic inactive RNA exosome core complex of 9 subunits (Exo-9) is proposed to play a pivotal role in the binding and presentation of RNA for ribonucleolysis, and to serve as a scaffold for the association with catalytic subunits and accessory proteins or complexes. EXOSC3 as peripheral part of the Exo-9 complex stabilizes the hexameric ring of RNase PH-domain subunits through contacts with EXOSC9 and EXOSC5. The protein is Exosome complex component RRP40 (EXOSC3) of Homo sapiens (Human).